A 149-amino-acid polypeptide reads, in one-letter code: MERTFIAIKPDGVQRGLVGEILQRFERRGFKLVGLKLMQVSEALAQKHYAEHKERPFFGGLVAFITSSPVVAVVLEGKGVVATARAMMGVTNPLNSPLGTIRGDYGIDIGRNIIHGSDSLESAEREIALWFAPAELLEWQATLGSWVYE.

Lysine 9, phenylalanine 57, arginine 85, threonine 91, arginine 102, and asparagine 112 together coordinate ATP. The active-site Pros-phosphohistidine intermediate is the histidine 115.

The protein belongs to the NDK family. Homotetramer. It depends on Mg(2+) as a cofactor.

It localises to the cytoplasm. It catalyses the reaction a 2'-deoxyribonucleoside 5'-diphosphate + ATP = a 2'-deoxyribonucleoside 5'-triphosphate + ADP. It carries out the reaction a ribonucleoside 5'-diphosphate + ATP = a ribonucleoside 5'-triphosphate + ADP. Its function is as follows. Major role in the synthesis of nucleoside triphosphates other than ATP. The ATP gamma phosphate is transferred to the NDP beta phosphate via a ping-pong mechanism, using a phosphorylated active-site intermediate. The sequence is that of Nucleoside diphosphate kinase from Gloeobacter violaceus (strain ATCC 29082 / PCC 7421).